We begin with the raw amino-acid sequence, 231 residues long: Urease accessory protein UreE (231 aa).

Residues 185 to 231 (VASPLDEPHGSGLHIHGIHSHEEGHSHGDHDHDHSHSHGDHDHDHKH) form a disordered region. Over residues 203-231 (HSHEEGHSHGDHDHDHSHSHGDHDHDHKH) the composition is skewed to basic and acidic residues.

This sequence belongs to the UreE family.

It localises to the cytoplasm. Functionally, involved in urease metallocenter assembly. Binds nickel. Probably functions as a nickel donor during metallocenter assembly. The protein is Urease accessory protein UreE of Yersinia pestis bv. Antiqua (strain Antiqua).